The sequence spans 166 residues: Probable protein tyrosine phosphatase type IVA A (166 aa).

Positions 10–164 (NPASLVESST…YKSKKKSSCR (155 aa)) constitute a Tyrosine-protein phosphatase domain. The cysteines at positions 52 and 107 are disulfide-linked. Asp75 functions as the Proton donor in the catalytic mechanism. The Phosphocysteine intermediate role is filled by Cys107. Residue 108-113 (VAGLGR) coordinates phosphate. Residue Arg113 coordinates substrate. Cys163 carries the cysteine methyl ester modification. Cys163 carries S-farnesyl cysteine lipidation. A propeptide spans 164–166 (RIM) (removed in mature form).

It belongs to the protein-tyrosine phosphatase family.

It localises to the membrane. It carries out the reaction O-phospho-L-tyrosyl-[protein] + H2O = L-tyrosyl-[protein] + phosphate. The polypeptide is Probable protein tyrosine phosphatase type IVA A (Dictyostelium discoideum (Social amoeba)).